We begin with the raw amino-acid sequence, 53 residues long: Cytochrome c oxidase subunit 7e (53 aa).

Slime mold cytochrome c oxidase consists of at least seven different polypeptides species, subunits I, II, III, IV, V, VI, and VIIe/s in order of MW.

It is found in the mitochondrion inner membrane. The enzyme catalyses 4 Fe(II)-[cytochrome c] + O2 + 8 H(+)(in) = 4 Fe(III)-[cytochrome c] + 2 H2O + 4 H(+)(out). This protein is one of the nuclear-coded polypeptide chains of cytochrome c oxidase, the terminal oxidase in mitochondrial electron transport. The polypeptide is Cytochrome c oxidase subunit 7e (cxgE) (Dictyostelium discoideum (Social amoeba)).